The primary structure comprises 189 residues: MRLVIGISGASGVVLGYHMLKVLRFFPECETHLVISEGAKLTFGLETDLKIEDVEKLADFVYSNTNLAASISSGSFKTDGMIVIPCSMKTLSGIATGYAENLLIRAADVCLKENRKVVLVPREMPFGKLHIRNMKEASDLGCVIIPPLLTFYNNPQTIEEQINHIIGKILMQFGLEHEKFKAWEGTKDD.

Residues 9–11 (GAS), S36, 87–90 (SMKT), and R122 each bind FMN.

This sequence belongs to the UbiX/PAD1 family. YclB subfamily. As to quaternary structure, homododecamer.

The enzyme catalyses dimethylallyl phosphate + FMNH2 = prenylated FMNH2 + phosphate. In terms of biological role, involved in the non-oxidative decarboxylation and detoxification of phenolic derivatives under anaerobic conditions. Flavin prenyltransferase that catalyzes the synthesis of the prenylated FMN cofactor (prenyl-FMN) for phenolic acid decarboxylase. The sequence is that of Probable UbiX-like flavin prenyltransferase from Sedimentibacter hydroxybenzoicus (Clostridium hydroxybenzoicum).